Consider the following 239-residue polypeptide: O-methyltransferase ankF (239 aa).

S-adenosyl-L-methionine contacts are provided by residues Glu71, 73-74 (GT), Ser79, Glu98, and Ala127.

This sequence belongs to the class I-like SAM-binding methyltransferase superfamily. Cation-dependent O-methyltransferase family.

It catalyses the reaction NK13650 B + S-adenosyl-L-methionine = NK13650 D + S-adenosyl-L-homocysteine + H(+). The protein operates within secondary metabolite biosynthesis. Functionally, O-methyltransferase; part of the ank cluster that mediates the biosynthesis of NK13650 C, a highly modified cyclo-arginine-tyrosine dipeptide. AnkF converts NK13650 B to produce NK13650 D via methylation of the C-17 phenol group. Within the pathway, the cyclodipeptide synthase ankA acts as the scaffold-generating enzyme and is responsible for formation of the cyclo-Arg-Tyr diketopiperazine (cRY) from L-Arg and L-Tyr. The ankA product cRY is desaturated by the cytochrome P450 monooxygenase ankB to yield a dehydro-cyclodipeptide intermediate. The FAD-dependent monooxygenase ankC then installs the m-OH, ankD catalyzes the attachment of L-homoserine, and ankE ligates citrate to the ankD product to yield NK13650 B. The O-methyltransferase ankF is responsible for methylation of the C-17 phenol group of NK13650 B to produce NK13650 D. Amidation of NK13650 D with L-Asp by ankG then leads to the production of NK13650 C, whereas amidation of NK13650 B produces NK13650 A. The sequence is that of O-methyltransferase ankF from Aspergillus thermomutatus (Neosartorya pseudofischeri).